The primary structure comprises 354 residues: Peptide chain release factor 1 (354 aa).

Glutamine 230 is subject to N5-methylglutamine. The tract at residues lysine 282 to arginine 301 is disordered.

The protein belongs to the prokaryotic/mitochondrial release factor family. Post-translationally, methylated by PrmC. Methylation increases the termination efficiency of RF1.

It localises to the cytoplasm. In terms of biological role, peptide chain release factor 1 directs the termination of translation in response to the peptide chain termination codons UAG and UAA. In Leptospira borgpetersenii serovar Hardjo-bovis (strain L550), this protein is Peptide chain release factor 1.